We begin with the raw amino-acid sequence, 177 residues long: Small ribosomal subunit protein uS5 (177 aa).

Positions leucine 21–isoleucine 84 constitute an S5 DRBM domain.

This sequence belongs to the universal ribosomal protein uS5 family. In terms of assembly, part of the 30S ribosomal subunit. Contacts proteins S4 and S8.

Its function is as follows. With S4 and S12 plays an important role in translational accuracy. Located at the back of the 30S subunit body where it stabilizes the conformation of the head with respect to the body. The polypeptide is Small ribosomal subunit protein uS5 (Nitrosomonas eutropha (strain DSM 101675 / C91 / Nm57)).